Here is a 181-residue protein sequence, read N- to C-terminus: HGPRTase-like protein 2 (181 aa).

The protein belongs to the purine/pyrimidine phosphoribosyltransferase family. Archaeal HPRT subfamily.

May catalyze a purine salvage reaction, the substrate is unknown. The chain is HGPRTase-like protein 2 from Haloterrigena turkmenica (strain ATCC 51198 / DSM 5511 / JCM 9101 / NCIMB 13204 / VKM B-1734 / 4k) (Halococcus turkmenicus).